Reading from the N-terminus, the 839-residue chain is Probable beta-glucosidase I (839 aa).

Residue asparagine 197 is glycosylated (N-linked (GlcNAc...) asparagine). The active site involves aspartate 225. The 161-residue stretch at 395 to 555 (DGKTGFSFKV…GQEELISNAV (161 aa)) folds into the PA14 domain. Asparagine 620 carries an N-linked (GlcNAc...) asparagine glycan.

Belongs to the glycosyl hydrolase 3 family.

It is found in the secreted. It catalyses the reaction Hydrolysis of terminal, non-reducing beta-D-glucosyl residues with release of beta-D-glucose.. It functions in the pathway glycan metabolism; cellulose degradation. Its function is as follows. Beta-glucosidases are one of a number of cellulolytic enzymes involved in the degradation of cellulosic biomass. Catalyzes the last step releasing glucose from the inhibitory cellobiose. This is Probable beta-glucosidase I (bglI) from Aspergillus oryzae (strain ATCC 42149 / RIB 40) (Yellow koji mold).